A 139-amino-acid polypeptide reads, in one-letter code: Mitochondrial intermembrane space import and assembly protein 40 (139 aa).

3 disulfide bridges follow: C53-C55, C64-C97, and C74-C87. Positions 61-105 (SGPCGEQFKSAFSCFHYSQEEIKGSDCLDQFRAMQECMQKYPDIY) constitute a CHCH domain. Short sequence motifs (cx9C motif) lie at residues 64 to 74 (CGEQFKSAFSC) and 87 to 97 (CLDQFRAMQEC). The interval 102–139 (PDIYPQEDDEDEAEKEKQNKEAEAFSTETSDTKEESSS) is disordered. Residues 115 to 124 (EKEKQNKEAE) show a composition bias toward basic and acidic residues.

Monomer. Can form homooligomers.

It is found in the mitochondrion intermembrane space. In terms of biological role, central component of a redox-sensitive mitochondrial intermembrane space import machinery which is required for the biogenesis of respiratory chain complexes. Functions as chaperone and catalyzes the formation of disulfide bonds in substrate proteins, such as COX17 or MICU1. Required for the import and folding of small cysteine-containing proteins (small Tim) in the mitochondrial intermembrane space (IMS). Precursor proteins to be imported into the IMS are translocated in their reduced form into the mitochondria. In Xenopus tropicalis (Western clawed frog), this protein is Mitochondrial intermembrane space import and assembly protein 40 (chchd4).